Consider the following 894-residue polypeptide: Histone-lysine N-methyltransferase PRDM9 (894 aa).

2 disordered regions span residues 1–23 (MSPE…RKPM) and 143–174 (SGSE…LRKK). The 64-residue stretch at 23-86 (MVKDAFKDIS…RRQAIKLQVD (64 aa)) folds into the KRAB-related domain. Residues 143–164 (SGSEQAQKPVSPSGEASTSGQH) are compositionally biased toward polar residues. Residues C205, C208, C216, and H219 each contribute to the Zn(2+) site. The region spanning 244-358 (PGLRIGPSGI…PGCELLVWYG (115 aa)) is the SET domain. S-adenosyl-L-methionine-binding positions include 256–258 (AGL), Y291, and 320–321 (NC). 288 to 294 (NNGYSWL) is a substrate binding site. Substrate is bound at residue Y357. At K368 the chain carries N6,N6,N6-trimethyllysine; alternate. Residue K368 is modified to N6-methyllysine; alternate. K372 and K374 each carry N6-methyllysine. The C2H2-type 1 zinc-finger motif lies at 388 to 411 (HPCPSCCLAFSSQKFLSQHVERNH). Residues C390, C393, H406, and H411 each coordinate Zn(2+). Positions 408-469 (ERNHSSQNFP…SKLLNKRTWQ (62 aa)) are disordered. The segment covering 444-461 (PHSRNDKTKGQEIKERSK) has biased composition (basic and acidic residues). A C2H2-type 2; degenerate zinc finger spans residues 524–546 (VKYGECGQGFSVKSDVITHQRTH). 12 C2H2-type zinc fingers span residues 552–574 (YVCR…QRIH), 580–602 (YVCR…QRTH), 608–630 (YVCR…QRRH), 636–658 (YVCR…QRRH), 664–686 (YVCR…QRTH), 692–714 (YVCR…QRTH), 720–742 (YVCR…QRTH), 748–770 (YVCR…QRTH), 776–798 (YVCR…QRTH), 804–826 (YVCR…QRTH), 832–854 (YVCR…QRTH), and 860–882 (YVCR…QRTH). Residues C722, C725, H738, H742, C750, C753, H766, H770, C778, C781, H794, H798, C806, C809, H822, and H826 each contribute to the Zn(2+) site. Residues 730 to 820 (SNKSHLLRHQ…RGFSNKSHLL (91 aa)) are DNA-binding.

The protein belongs to the class V-like SAM-binding methyltransferase superfamily. Homodimer. Interacts with EHMT2 and CDYL; interaction only takes place when PRDM9 is bound to hotspot DNA. Interacts with CXXC1; this interaction does not link PRDM9-activated recombination hotspot sites with DSB machinery and is not required for the hotspot recognition pathway. Forms a complex with EWSR1, REC8, SYCP3 and SYCP1; complex formation is dependent of phosphorylated form of REC8 and requires PRDM9 bound to hotspot DNA; EWSR1 joins PRDM9 with the chromosomal axis through REC8. In terms of processing, mono-methylated; automethylated. Tri-methylated; automethylated. Mono-methylation is predominant; automethylation is lower and slower than H3 peptide methylation and is in a highest S-adenosyl-L-methionine concentration-dependent. There are two major sites for automethylation at Lys-368 and Lys-374. Lysines can be simultaneously methylated, such as Lys-368(me3)/Lys-372(me1), Lys-368(me1)/Lys-374(me1) and Lys-368(me1)/Lys-372(me1)/Lys-374(me1). Automethylation is an intramolecular (cis) process.

The protein resides in the nucleus. Its subcellular location is the chromosome. The catalysed reaction is L-lysyl-[protein] + S-adenosyl-L-methionine = N(6)-methyl-L-lysyl-[protein] + S-adenosyl-L-homocysteine + H(+). It catalyses the reaction N(6)-methyl-L-lysyl-[protein] + S-adenosyl-L-methionine = N(6),N(6)-dimethyl-L-lysyl-[protein] + S-adenosyl-L-homocysteine + H(+). It carries out the reaction L-lysyl(4)-[histone H3] + 3 S-adenosyl-L-methionine = N(6),N(6),N(6)-trimethyl-L-lysyl(4)-[histone H3] + 3 S-adenosyl-L-homocysteine + 3 H(+). The enzyme catalyses L-lysyl(36)-[histone H3] + 3 S-adenosyl-L-methionine = N(6),N(6),N(6)-trimethyl-L-lysyl(36)-[histone H3] + 3 S-adenosyl-L-homocysteine + 3 H(+). The catalysed reaction is L-lysyl(9)-[histone H3] + 3 S-adenosyl-L-methionine = N(6),N(6),N(6)-trimethyl-L-lysyl(9)-[histone H3] + 3 S-adenosyl-L-homocysteine + 3 H(+). It catalyses the reaction L-lysyl(20)-[histone H4] + S-adenosyl-L-methionine = N(6)-methyl-L-lysyl(20)-[histone H4] + S-adenosyl-L-homocysteine + H(+). It carries out the reaction N(6)-methyl-L-lysyl(20)-[histone H4] + S-adenosyl-L-methionine = N(6),N(6)-dimethyl-L-lysyl(20)-[histone H4] + S-adenosyl-L-homocysteine + H(+). Its activity is regulated as follows. Inhibited by suramin with an IC(50) of 4.1 uM. Histone methyltransferase that sequentially mono-, di-, and tri-methylates both 'Lys-4' (H3K4) and 'Lys-36' (H3K36) of histone H3 to produce respectively trimethylated 'Lys-4' (H3K4me3) and trimethylated 'Lys-36' (H3K36me3) histone H3 and plays a key role in meiotic prophase by determining hotspot localization thereby promoting meiotic recombination. Can also methylate all four core histones with H3 being the best substrate and the most highly modified. Is also able, on one hand, to mono and di-methylate H4K20 and on other hand to trimethylate H3K9 with the di-methylated H3K9 as the best substrate. During meiotic prophase, binds specific DNA sequences through its zinc finger domains thereby determining hotspot localization where it promotes local H3K4me3 and H3K36me3 enrichment on the same nucleosomes through its histone methyltransferase activity. Thereby promotes double-stranded breaks (DSB) formation, at this subset of PRDM9-binding sites, that initiates meiotic recombination for the proper meiotic progression. During meiotic progression hotspot-bound PRDM9 interacts with several complexes; in early leptonema binds CDYL and EHMT2 followed by EWSR1 and CXXC1 by the end of leptonema. EWSR1 joins PRDM9 with the chromosomal axis through REC8. In this way, controls the DSB repair pathway, pairing of homologous chromosomes and sex body formation. Moreover plays a central role in the transcriptional activation of genes during early meiotic prophase thanks to H3K4me3 and H3K36me3 enrichment that represents a specific tag for epigenetic transcriptional activation. In addition performs automethylation. Acetylation and phosphorylation of histone H3 attenuate or prevent histone H3 methylation. This chain is Histone-lysine N-methyltransferase PRDM9, found in Homo sapiens (Human).